The primary structure comprises 798 residues: ABC transporter G family member 4 (798 aa).

A disordered region spans residues 1–51 (MEDIGNNNFEIIDDKSDEKNDENFEDKNSRNNINEEQILSNQQQQQQQQQQ). Positions 12–29 (IDDKSDEKNDENFEDKNS) are enriched in basic and acidic residues. Residues 30-41 (RNNINEEQILSN) are compositionally biased toward polar residues. Residues 34 to 83 (NEEQILSNQQQQQQQQQQQQQQQQQQQQQQQQQQQQQQEQQQFKNEVINT) are a coiled coil. Residues 42 to 51 (QQQQQQQQQQ) show a composition bias toward low complexity. The ABC transporter domain occupies 211 to 464 (IDIEDIESQV…SIDSNYKCPP (254 aa)). 253–260 (GPSGSGKS) contacts ATP. The next 7 membrane-spanning stretches (helical) occupy residues 540–560 (VVFF…SACF), 579–599 (LFFF…STFV), 628–648 (IVSS…IVHL), 656–676 (ILSL…VIAM), 687–707 (FSYC…LVPI), 713–733 (SFGW…IVII), and 771–791 (SIGI…IGLY). Residues 540-793 (VVFFSKIVIA…ILAYIGLYKF (254 aa)) form the ABC transmembrane type-2 domain.

This sequence belongs to the ABC transporter superfamily. ABCG family. Eye pigment precursor importer (TC 3.A.1.204) subfamily.

Its subcellular location is the membrane. This Dictyostelium discoideum (Social amoeba) protein is ABC transporter G family member 4 (abcG4).